Here is a 428-residue protein sequence, read N- to C-terminus: D-amino acid dehydrogenase (428 aa).

3-17 contributes to the FAD binding site; sequence VVILGSGVVGVASAY.

It belongs to the DadA oxidoreductase family. FAD is required as a cofactor.

The catalysed reaction is a D-alpha-amino acid + A + H2O = a 2-oxocarboxylate + AH2 + NH4(+). It participates in amino-acid degradation; D-alanine degradation; NH(3) and pyruvate from D-alanine: step 1/1. In terms of biological role, oxidative deamination of D-amino acids. In Burkholderia vietnamiensis (strain G4 / LMG 22486) (Burkholderia cepacia (strain R1808)), this protein is D-amino acid dehydrogenase.